The chain runs to 208 residues: Glycerol-3-phosphate acyltransferase 1 (208 aa).

The next 5 helical transmembrane spans lie at 52-72, 77-97, 112-132, 140-160, and 161-181; these read VVLM…YLLI, WVIL…WLDF, FLLP…LVFI, IALA…YGSH, and SEFA…KFVL.

The protein belongs to the PlsY family. Probably interacts with PlsX.

It is found in the cell membrane. The enzyme catalyses an acyl phosphate + sn-glycerol 3-phosphate = a 1-acyl-sn-glycero-3-phosphate + phosphate. The protein operates within lipid metabolism; phospholipid metabolism. In terms of biological role, catalyzes the transfer of an acyl group from acyl-phosphate (acyl-PO(4)) to glycerol-3-phosphate (G3P) to form lysophosphatidic acid (LPA). This enzyme utilizes acyl-phosphate as fatty acyl donor, but not acyl-CoA or acyl-ACP. In Dehalococcoides mccartyi (strain ATCC BAA-2266 / KCTC 15142 / 195) (Dehalococcoides ethenogenes (strain 195)), this protein is Glycerol-3-phosphate acyltransferase 1.